A 538-amino-acid polypeptide reads, in one-letter code: Translation initiation factor IF-3, chloroplastic (538 aa).

The N-terminal 140 residues, 1 to 140 (MVRSSCLQCD…VTQRKEIAVF (140 aa)), are a transit peptide targeting the chloroplast. The head stretch occupies residues 141–290 (SASGQAAEPE…EEVEEEQEVL (150 aa)). 2 disordered regions span residues 146–165 (AAEPEGAEPLKRPFPSPAAK) and 188–210 (RTDSTYGRGPRSTSFTDISNWPS). The tract at residues 291–474 (SWADRRRALA…LILNLAPAGE (184 aa)) is IF-3 like. Positions 484 to 538 (AERDRKAAAEEEGEGDDLDFVDENEDEDVEGEGEEEEAEELEEETAEGTEVPTRS) are disordered. Residues 493-530 (EEEGEGDDLDFVDENEDEDVEGEGEEEEAEELEEETAE) show a composition bias toward acidic residues.

Belongs to the IF-3 family. In terms of assembly, monomer. In terms of processing, the N-terminus is blocked.

It is found in the plastid. The protein localises to the chloroplast. Its function is as follows. Involved in chloroplast protein synthesis. It enhances the poly(A,U,G)-dependent binding of the initiator tRNA to chloroplast 30S subunits. This is Translation initiation factor IF-3, chloroplastic from Euglena gracilis.